A 428-amino-acid polypeptide reads, in one-letter code: Light-independent protochlorophyllide reductase subunit N (428 aa).

Residues Cys-16, Cys-41, and Cys-102 each coordinate [4Fe-4S] cluster.

This sequence belongs to the BchN/ChlN family. Protochlorophyllide reductase is composed of three subunits; ChlL, ChlN and ChlB. Forms a heterotetramer of two ChlB and two ChlN subunits. [4Fe-4S] cluster serves as cofactor.

It catalyses the reaction chlorophyllide a + oxidized 2[4Fe-4S]-[ferredoxin] + 2 ADP + 2 phosphate = protochlorophyllide a + reduced 2[4Fe-4S]-[ferredoxin] + 2 ATP + 2 H2O. Its pathway is porphyrin-containing compound metabolism; chlorophyll biosynthesis (light-independent). Its function is as follows. Component of the dark-operative protochlorophyllide reductase (DPOR) that uses Mg-ATP and reduced ferredoxin to reduce ring D of protochlorophyllide (Pchlide) to form chlorophyllide a (Chlide). This reaction is light-independent. The NB-protein (ChlN-ChlB) is the catalytic component of the complex. This chain is Light-independent protochlorophyllide reductase subunit N, found in Synechococcus sp. (strain CC9311).